The following is a 214-amino-acid chain: Phosphoheptose isomerase (214 aa).

One can recognise an SIS domain in the interval 51–209 (IASTFEDGGK…IDLVERLLGY (159 aa)). 66-68 (NGG) provides a ligand contact to substrate. Residues His75 and Glu79 each coordinate Zn(2+). Substrate is bound by residues Glu79, 110–111 (ND), 136–138 (STS), Ser141, and Gln189. Zn(2+) is bound by residues Gln189 and His197.

It belongs to the SIS family. GmhA subfamily. Zn(2+) serves as cofactor.

The protein resides in the cytoplasm. The catalysed reaction is 2 D-sedoheptulose 7-phosphate = D-glycero-alpha-D-manno-heptose 7-phosphate + D-glycero-beta-D-manno-heptose 7-phosphate. Its pathway is carbohydrate biosynthesis; D-glycero-D-manno-heptose 7-phosphate biosynthesis; D-glycero-alpha-D-manno-heptose 7-phosphate and D-glycero-beta-D-manno-heptose 7-phosphate from sedoheptulose 7-phosphate: step 1/1. Functionally, catalyzes the isomerization of sedoheptulose 7-phosphate in D-glycero-D-manno-heptose 7-phosphate. This is Phosphoheptose isomerase from Chlorobium limicola (strain DSM 245 / NBRC 103803 / 6330).